The primary structure comprises 242 residues: Demethylmenaquinone methyltransferase (242 aa).

S-adenosyl-L-methionine contacts are provided by residues Thr-62, Asp-83, and 112–113 (DV).

The protein belongs to the class I-like SAM-binding methyltransferase superfamily. MenG/UbiE family.

The enzyme catalyses a 2-demethylmenaquinol + S-adenosyl-L-methionine = a menaquinol + S-adenosyl-L-homocysteine + H(+). It participates in quinol/quinone metabolism; menaquinone biosynthesis; menaquinol from 1,4-dihydroxy-2-naphthoate: step 2/2. Methyltransferase required for the conversion of demethylmenaquinol (DMKH2) to menaquinol (MKH2). The protein is Demethylmenaquinone methyltransferase of Protochlamydia amoebophila (strain UWE25).